The primary structure comprises 497 residues: Glycerol kinase (497 aa).

Position 12 (threonine 12) interacts with ADP. ATP is bound by residues threonine 12, threonine 13, and serine 14. Residue threonine 12 participates in sn-glycerol 3-phosphate binding. Arginine 16 contacts ADP. Positions 82, 83, 134, and 243 each coordinate sn-glycerol 3-phosphate. Glycerol contacts are provided by arginine 82, glutamate 83, tyrosine 134, aspartate 243, and glutamine 244. Threonine 265 and glycine 308 together coordinate ADP. Residues threonine 265, glycine 308, glutamine 312, and glycine 411 each coordinate ATP. ADP is bound at residue glycine 411.

This sequence belongs to the FGGY kinase family.

It catalyses the reaction glycerol + ATP = sn-glycerol 3-phosphate + ADP + H(+). It participates in polyol metabolism; glycerol degradation via glycerol kinase pathway; sn-glycerol 3-phosphate from glycerol: step 1/1. Inhibited by fructose 1,6-bisphosphate (FBP). Functionally, key enzyme in the regulation of glycerol uptake and metabolism. Catalyzes the phosphorylation of glycerol to yield sn-glycerol 3-phosphate. In Rhizobium meliloti (strain 1021) (Ensifer meliloti), this protein is Glycerol kinase.